Reading from the N-terminus, the 331-residue chain is MRFRFGVVVPPAGAGAAPELLVVGSRPELGRWEPRGAVRLRPAGSAAGGGARALQEPGLWLGEVELAPGEAARDGAEPARVDTFWYKFLKREPGGALSWEGNGPHHDRCCTYNENNLVDGVYCLPIGHWIEATGHTNEMKHTTDFYFNIAGHQAMHYSRILPNIWLGSCPRQVEHITIKLKHELGITAVMNFQTEWDIVQNSSGCNRYPEPMTPDTMIKLYKEEGLVYIWMPTPDMSTEGRVQMLPQAVCLLHALLENGHTVYVHCNAGVGRSTAAVCGWLQYVMGWNLRKVQYFLMAKRPAVYIDEDALARAEEDFFQKFGKVRSSVCSV.

The CBM20 domain maps to 1 to 124 (MRFRFGVVVP…NNLVDGVYCL (124 aa)). Residue serine 25 is modified to Phosphoserine; by AMPK. Substrate-binding positions include tryptophan 32, lysine 87, 103-107 (GPHHD), aspartate 197, aspartate 235, and arginine 241. Residues 156–323 (HYSRILPNIW…EEDFFQKFGK (168 aa)) form the Tyrosine-protein phosphatase domain. The active-site Phosphocysteine intermediate is cysteine 266. The Glucan phosphatase signature motif CXAGXGR motif lies at 266–272 (CNAGVGR). Substrate-binding positions include 267 to 272 (NAGVGR) and tyrosine 304.

The protein belongs to the protein-tyrosine phosphatase family. In terms of assembly, homodimer. Interacts with itself. Interacts with PPP1R3B, PPP1R3C, PPP1R3D, HIRIP5, and EPM2AIP1. Binds glycogen and Lafora bodies. Interacts with NHLRC1/malin (via the NHL repeats). Forms a complex with NHLRC1/malin and HSP70. Interacts with PPP1R3D; in the presence of NHLC1/malin the interaction leads to ubiquitination and autophagic degradation of PPP1R3D. Interacts (via the phosphatase domain) with MAPT/Tau; the interaction dephosphorylates MAPT. Interacts with PRDM8. Post-translationally, polyubiquitinated by NHLRC1/malin. Phosphorylation on Ser-25 by AMPK affects the phosphatase activity of the enzyme and its ability to homodimerize and interact with NHLRC1, PPP1R3C or PRKAA2.

It is found in the cytoplasm. It localises to the endoplasmic reticulum membrane. The protein resides in the cell membrane. It catalyses the reaction O-phospho-L-tyrosyl-[protein] + H2O = L-tyrosyl-[protein] + phosphate. The enzyme catalyses O-phospho-L-seryl-[protein] + H2O = L-seryl-[protein] + phosphate. It carries out the reaction O-phospho-L-threonyl-[protein] + H2O = L-threonyl-[protein] + phosphate. Plays an important role in preventing glycogen hyperphosphorylation and the formation of insoluble aggregates, via its activity as glycogen phosphatase, and by promoting the ubiquitination of proteins involved in glycogen metabolism via its interaction with the E3 ubiquitin ligase NHLRC1/malin. Dephosphorylates phosphotyrosine and synthetic substrates, such as para-nitrophenylphosphate (pNPP), and has low activity with phosphoserine and phosphothreonine substrates (in vitro). Has also been shown to dephosphorylate MAPT. Shows strong phosphatase activity towards complex carbohydrates in vitro, avoiding glycogen hyperphosphorylation which is associated with reduced branching and formation of insoluble aggregates. Forms a complex with NHLRC1/malin and HSP70, which suppresses the cellular toxicity of misfolded proteins by promoting their degradation through the ubiquitin-proteasome system (UPS). Acts as a scaffold protein to facilitate PPP1R3C/PTG ubiquitination by NHLRC1/malin. Also promotes proteasome-independent protein degradation through the macroautophagy pathway. This is Laforin (EPM2A) from Canis lupus familiaris (Dog).